Consider the following 152-residue polypeptide: 3-dehydroquinate dehydratase (152 aa).

Tyrosine 26 functions as the Proton acceptor in the catalytic mechanism. 3 residues coordinate substrate: asparagine 78, histidine 84, and aspartate 91. Histidine 104 (proton donor) is an active-site residue. Residues 105–106 and arginine 115 contribute to the substrate site; that span reads IS.

It belongs to the type-II 3-dehydroquinase family. As to quaternary structure, homododecamer.

The catalysed reaction is 3-dehydroquinate = 3-dehydroshikimate + H2O. It functions in the pathway metabolic intermediate biosynthesis; chorismate biosynthesis; chorismate from D-erythrose 4-phosphate and phosphoenolpyruvate: step 3/7. In terms of biological role, catalyzes a trans-dehydration via an enolate intermediate. The chain is 3-dehydroquinate dehydratase from Buchnera aphidicola subsp. Cinara cedri (strain Cc).